Consider the following 207-residue polypeptide: Probable glutathione S-transferase 5 (207 aa).

The GST N-terminal domain maps to 2–81; sequence VSYKLTYFNG…FLAREFKLNG (80 aa). Glutathione-binding positions include Tyr-8, Trp-39, Lys-43, 51–53, and 65–66; these read GQL and QS. The GST C-terminal domain occupies 83-207; the sequence is TAWEEAQVNS…WIETRPVTPF (125 aa).

The protein belongs to the GST superfamily. Sigma family.

The enzyme catalyses RX + glutathione = an S-substituted glutathione + a halide anion + H(+). Its function is as follows. Conjugation of reduced glutathione to a wide number of exogenous and endogenous hydrophobic electrophiles. May play a role in the detoxification of reactive oxygen species produced during pathogenic bacterial infection. The sequence is that of Probable glutathione S-transferase 5 (gst-5) from Caenorhabditis elegans.